Reading from the N-terminus, the 363-residue chain is Peptide chain release factor 1 (363 aa).

Gln-237 bears the N5-methylglutamine mark. The span at 284–296 (EDEKRRSAEESTR) shows a compositional bias: basic and acidic residues. Residues 284–305 (EDEKRRSAEESTRRSLVASGDR) form a disordered region.

This sequence belongs to the prokaryotic/mitochondrial release factor family. In terms of processing, methylated by PrmC. Methylation increases the termination efficiency of RF1.

It localises to the cytoplasm. Its function is as follows. Peptide chain release factor 1 directs the termination of translation in response to the peptide chain termination codons UAG and UAA. The polypeptide is Peptide chain release factor 1 (Shewanella baltica (strain OS185)).